A 673-amino-acid chain; its full sequence is Vasorin (673 aa).

The signal sequence occupies residues 1 to 24; sequence MHSRSCLPPLLLLLLVLLGSGVQG. An LRRNT domain is found at 25–53; it reads CPSGCQCNQPQTVFCTARQGTTVPRDVPP. At 25-576 the chain is on the extracellular side; that stretch reads CPSGCQCNQP…VTQAREGNLP (552 aa). 10 LRR repeats span residues 54–75, 78–99, 102–123, 126–147, 150–170, 171–192, 194–215, 218–239, 241–265, and 266–288; these read DTVGLYIFENGITTLDVGCFAG, GLQLLDLSQNQITSLPGGIFQP, NLSNLDLTANKLHEISNETFRG, RLERLYLGKNRIRHIQPGAFDA, RLLELKLPDNELRVLPPLHLP, RLLLLDLSHNSIPALEAGILDT, NVEALRLAGLGLRQLDEGLFGR, NLHDLDVSDNQLEHMPSVIQGL, GLTRLRLAGNTRIAQIRPEDLAGLT, and ALQELDVSNLSLQALPSDLSSLF. Asn-102 and Asn-118 each carry an N-linked (GlcNAc...) asparagine glycan. Asn-274 carries N-linked (GlcNAc...) asparagine glycosylation. Residues 299–352 enclose the LRRCT domain; the sequence is NPFNCLCPLSWFGPWVRENHVVLASPEETRCHFPPKNAGRLLLDLDYADFGCPV. Positions 369-389 are disordered; that stretch reads PTLSTSSQAPTWPSLTEPTTQ. Over residues 370–389 the composition is skewed to polar residues; that stretch reads TLSTSSQAPTWPSLTEPTTQ. Residues 406–443 enclose the EGF-like domain; that stretch reads QPQDCPASICLNGGSCRLGARHHWECLCPEGFIGLYCE. Intrachain disulfides connect Cys-410/Cys-421, Cys-415/Cys-431, and Cys-433/Cys-442. The region spanning 463-559 is the Fibronectin type-III domain; the sequence is PLLPLSIEPV…ACGEANTSQA (97 aa). N-linked (GlcNAc...) asparagine glycosylation is found at Asn-501, Asn-529, and Asn-555. A helical transmembrane segment spans residues 577 to 597; it reads LLIAPALAAVLLAVLAAAGAA. The Cytoplasmic portion of the chain corresponds to 598-673; sequence YCVRRARATS…QGVLPAKHYI (76 aa). A disordered region spans residues 608 to 648; the sequence is TAQDKGQVGPGTGPLELEGVKAPLEPGSKATEGGGEALSGG.

In terms of assembly, interacts with TGFB1, TGFB2 and TGFB3. N-glycosylated.

It is found in the membrane. May act as an inhibitor of TGF-beta signaling. This is Vasorin (Vasn) from Mus musculus (Mouse).